The primary structure comprises 151 residues: Small ribosomal subunit protein uS15 (151 aa).

The disordered stretch occupies residues 1-20 (MARLHSGKRGSSGSTRPLRT).

The protein belongs to the universal ribosomal protein uS15 family. As to quaternary structure, part of the 30S ribosomal subunit.

This Methanococcus maripaludis (strain C5 / ATCC BAA-1333) protein is Small ribosomal subunit protein uS15.